The sequence spans 163 residues: UPF0134 protein MPN_139 (163 aa).

It belongs to the UPF0134 family.

This is UPF0134 protein MPN_139 from Mycoplasma pneumoniae (strain ATCC 29342 / M129 / Subtype 1) (Mycoplasmoides pneumoniae).